A 291-amino-acid chain; its full sequence is 33 kDa chaperonin (291 aa).

Cystine bridges form between Cys229-Cys231 and Cys262-Cys265.

Belongs to the HSP33 family. Under oxidizing conditions two disulfide bonds are formed involving the reactive cysteines. Under reducing conditions zinc is bound to the reactive cysteines and the protein is inactive.

Its subcellular location is the cytoplasm. Redox regulated molecular chaperone. Protects both thermally unfolding and oxidatively damaged proteins from irreversible aggregation. Plays an important role in the bacterial defense system toward oxidative stress. This is 33 kDa chaperonin from Vibrio parahaemolyticus serotype O3:K6 (strain RIMD 2210633).